Reading from the N-terminus, the 313-residue chain is Ribosomal RNA small subunit methyltransferase H (313 aa).

Residues 35–37 (GGH), aspartate 55, phenylalanine 81, aspartate 103, and glutamine 110 each bind S-adenosyl-L-methionine.

This sequence belongs to the methyltransferase superfamily. RsmH family.

It is found in the cytoplasm. It carries out the reaction cytidine(1402) in 16S rRNA + S-adenosyl-L-methionine = N(4)-methylcytidine(1402) in 16S rRNA + S-adenosyl-L-homocysteine + H(+). Its function is as follows. Specifically methylates the N4 position of cytidine in position 1402 (C1402) of 16S rRNA. The sequence is that of Ribosomal RNA small subunit methyltransferase H from Pseudomonas paraeruginosa (strain DSM 24068 / PA7) (Pseudomonas aeruginosa (strain PA7)).